Reading from the N-terminus, the 564-residue chain is Glutamate--tRNA ligase (564 aa).

The 'HIGH' region signature appears at 107-117 (PNPNGPPTLGS).

Belongs to the class-I aminoacyl-tRNA synthetase family. Glutamate--tRNA ligase type 2 subfamily.

Its subcellular location is the cytoplasm. The catalysed reaction is tRNA(Glu) + L-glutamate + ATP = L-glutamyl-tRNA(Glu) + AMP + diphosphate. Catalyzes the attachment of glutamate to tRNA(Glu) in a two-step reaction: glutamate is first activated by ATP to form Glu-AMP and then transferred to the acceptor end of tRNA(Glu). The protein is Glutamate--tRNA ligase of Methanothrix thermoacetophila (strain DSM 6194 / JCM 14653 / NBRC 101360 / PT) (Methanosaeta thermophila).